Consider the following 960-residue polypeptide: Phosphoenolpyruvate carboxylase 1 (960 aa).

At Ser7 the chain carries Phosphoserine. Active-site residues include His168 and Lys596.

This sequence belongs to the PEPCase type 1 family. As to quaternary structure, homotetramer. Mg(2+) serves as cofactor.

The protein resides in the cytoplasm. It carries out the reaction oxaloacetate + phosphate = phosphoenolpyruvate + hydrogencarbonate. The protein operates within photosynthesis; C3 acid pathway. With respect to regulation, by light-reversible phosphorylation. In terms of biological role, through the carboxylation of phosphoenolpyruvate (PEP) it forms oxaloacetate, a four-carbon dicarboxylic acid source for the tricarboxylic acid cycle. The sequence is that of Phosphoenolpyruvate carboxylase 1 (PEPC) from Sorghum bicolor (Sorghum).